Here is a 595-residue protein sequence, read N- to C-terminus: Potassium-transporting ATPase potassium-binding subunit (595 aa).

Transmembrane regions (helical) follow at residues 9 to 29 (ICGYLGVLLALAKPLGSYMAA), 63 to 83 (TGYASAFLVFNLLGVLAVYAL), 135 to 155 (GLTVQNFVSAASGMAVLVALI), 177 to 197 (ILHILLPLSFLLALLLIGQGV), 285 to 305 (FLEMLAILVISGALCHTFGVM), 312 to 332 (GWVILAAMTLIFVPLLFVTVL), 412 to 432 (GLYGMLVFAIVAVFVAGLMIG), 451 to 471 (AIVILVPPLMVLGGTAVAVML), 516 to 536 (LMLGLAMWFSRYWLAVPVLAI), and 560 to 580 (FVGLLVGVVIIVGALTFIPAL).

It belongs to the KdpA family. As to quaternary structure, the system is composed of three essential subunits: KdpA, KdpB and KdpC.

The protein localises to the cell inner membrane. In terms of biological role, part of the high-affinity ATP-driven potassium transport (or Kdp) system, which catalyzes the hydrolysis of ATP coupled with the electrogenic transport of potassium into the cytoplasm. This subunit binds the periplasmic potassium ions and delivers the ions to the membrane domain of KdpB through an intramembrane tunnel. This Methylococcus capsulatus (strain ATCC 33009 / NCIMB 11132 / Bath) protein is Potassium-transporting ATPase potassium-binding subunit.